We begin with the raw amino-acid sequence, 221 residues long: CASP-like protein 2U10 (221 aa).

The disordered stretch occupies residues 1-22; it reads MDSSSKPMNGSAGGSPVGDERK. Residues 1–31 lie on the Cytoplasmic side of the membrane; it reads MDSSSKPMNGSAGGSPVGDERKMGDHEHEFR. The helical transmembrane segment at 32 to 52 threads the bilayer; the sequence is ISIILLRSFLLVLVIISEALM. Residues 53–91 lie on the Extracellular side of the membrane; it reads VTDRETGSVPLPFFGLPRPVFVTKTAKYELVTGLKFYVD. Residues 92–112 traverse the membrane as a helical segment; it reads ALGVVIGYTVLHLLFNIGLVA. Topologically, residues 113-122 are cytoplasmic; it reads TKGTVVDCKS. The helical transmembrane segment at 123–143 threads the bilayer; sequence VAWISFIADSMMGYLLLSSAA. Topologically, residues 144–174 are extracellular; the sequence is VATEIGYLAEEGAPAVLWRKVCNAFGYFCTV. A helical membrane pass occupies residues 175 to 195; it reads YAISVVICFIAALVSFVVVGI. At 196–221 the chain is on the cytoplasmic side; sequence SAYHLFRLYGIQQQAAREKEKLSAEM.

Belongs to the Casparian strip membrane proteins (CASP) family. As to quaternary structure, homodimer and heterodimers.

It is found in the cell membrane. The protein is CASP-like protein 2U10 of Selaginella moellendorffii (Spikemoss).